The sequence spans 178 residues: Photosystem I assembly protein Ycf4 (178 aa).

The next 2 membrane-spanning stretches (helical) occupy residues 19–39 and 61–81; these read ILVAAMVTIGGVGFLFASLSS and LVMGLYSIAAALLATYLWAVI.

Belongs to the Ycf4 family.

It localises to the cellular thylakoid membrane. Its function is as follows. Seems to be required for the assembly of the photosystem I complex. In Synechococcus sp. (strain WH7803), this protein is Photosystem I assembly protein Ycf4.